Consider the following 182-residue polypeptide: Endoribonuclease YbeY (182 aa).

Residues His115, His119, and His125 each coordinate Zn(2+).

Belongs to the endoribonuclease YbeY family. Zn(2+) is required as a cofactor.

It is found in the cytoplasm. Single strand-specific metallo-endoribonuclease involved in late-stage 70S ribosome quality control and in maturation of the 3' terminus of the 16S rRNA. The protein is Endoribonuclease YbeY of Bifidobacterium longum subsp. infantis (strain ATCC 15697 / DSM 20088 / JCM 1222 / NCTC 11817 / S12).